Here is a 71-residue protein sequence, read N- to C-terminus: Large ribosomal subunit protein bL31 (71 aa).

Zn(2+) is bound by residues cysteine 16, cysteine 18, cysteine 37, and cysteine 40.

It belongs to the bacterial ribosomal protein bL31 family. Type A subfamily. As to quaternary structure, part of the 50S ribosomal subunit. Zn(2+) is required as a cofactor.

Its function is as follows. Binds the 23S rRNA. This Pseudomonas putida (strain GB-1) protein is Large ribosomal subunit protein bL31.